The primary structure comprises 27 residues: Protein YqiM (27 aa).

This Escherichia coli (strain K12) protein is Protein YqiM.